The primary structure comprises 678 residues: Secretin ExeD (678 aa).

The signal sequence occupies residues 1–25; that stretch reads MINKGKSWRLATVAAALMMAGSAWA. The interval 26–122 is N0; the sequence is TEYSASFKNA…VVDETNPGIG (97 aa). An N1 region spans residues 124-188; that stretch reads EMVTRVVPVR…EVVRRVDKAG (65 aa). Positions 189 to 264 are N2; that stretch reads DQEVDIIKLR…MVRQLDRDLQ (76 aa). The N3 stretch occupies residues 267 to 347; it reads GNTRVFYLKY…ELEQVVAKLD (81 aa). A secretin region spans residues 352 to 602; that stretch reads QVLVEAIIVE…VFIRPTILRD (251 aa). The segment at 604 to 678 is s domain; the sequence is HVYSGISSNK…GAQPFVQGNK (75 aa).

This sequence belongs to the bacterial secretin family. GSP D subfamily. As to quaternary structure, forms a cylindrical channel with 15 subunits.

Its subcellular location is the cell outer membrane. In terms of biological role, involved in a type II secretion system (T2SS, formerly general secretion pathway, GSP) for the export of proteins. This subunit forms the outer membrane channel. This is Secretin ExeD (exeD) from Aeromonas salmonicida.